The chain runs to 77 residues: RNA-binding protein Hfq (77 aa).

The Sm domain occupies 10 to 70 (DAFLNHVRKA…ISTIMPGQPI (61 aa)).

The protein belongs to the Hfq family. In terms of assembly, homohexamer.

RNA chaperone that binds small regulatory RNA (sRNAs) and mRNAs to facilitate mRNA translational regulation in response to envelope stress, environmental stress and changes in metabolite concentrations. Also binds with high specificity to tRNAs. This is RNA-binding protein Hfq from Cereibacter sphaeroides (strain ATCC 17029 / ATH 2.4.9) (Rhodobacter sphaeroides).